Reading from the N-terminus, the 178-residue chain is Zinc finger CCHC domain-containing protein 10 (178 aa).

A CCHC-type zinc finger spans residues 21 to 38 (VRCQKCLEFGHWTYECKG). Residues 66–178 (QSIGETNIEK…EPQKKKKKKK (113 aa)) are disordered. Low complexity-rich tracts occupy residues 85–113 (SVTS…SSSS) and 121–164 (SLSS…SSES).

The polypeptide is Zinc finger CCHC domain-containing protein 10 (Zcchc10) (Mus musculus (Mouse)).